A 3305-amino-acid chain; its full sequence is Microtubule-actin cross-linking factor 1, isoforms 6/7 (3305 aa).

7 disordered regions span residues 1–24 (MGKPLSRPDCLRRNPTCLGKGEDE), 108–140 (VQKSAPVPPRRRPNAERKDNVNRRSWKSFMPPN), 152–202 (LSEV…KSVD), 239–272 (AAASGNTDEMQEHRFSSATWPRAMKSSSKGGFSE), 333–381 (EEWE…VAVS), 941–1007 (EPAI…PEWS), and 2865–2896 (SVEPTHAPFMEKSRSGSRKSLNQPTPPPMPIL). Basic and acidic residues predominate over residues 120–129 (PNAERKDNVN). 2 consecutive EF-hand domains span residues 2958–2993 (HKKSRVMDFFRRIDKDQDGKITRQEFIDGILASKFP) and 2994–3029 (TTKLEMTAVADIFDRDGDGYIDYYEFVAALHPNKDA). Asp-2971, Asp-2973, Asp-2975, Lys-2977, Glu-2982, Asp-3007, Asp-3009, Asp-3011, Tyr-3013, and Glu-3018 together coordinate Ca(2+). Residues 3034 to 3106 (TDADKIEDEV…EFLVKNDPCR (73 aa)) enclose the GAR domain. The tract at residues 3122–3305 (PEGASQGMTP…ASPRTPGPKR (184 aa)) is disordered. The segment covering 3142-3176 (SSRAASPTRSSSSASQSNHSCTSMPSSPATPASGT) has biased composition (low complexity). Polar residues predominate over residues 3193–3212 (FHSSRTSLAGDTSNSSSPAS). Over residues 3227-3241 (SRPGSRAGSRAGSRA) the composition is skewed to low complexity. Residues 3256 to 3266 (ETQSACSDTSE) are compositionally biased toward polar residues. The segment covering 3267 to 3278 (SSAAGGQGSSRR) has biased composition (low complexity).

The protein localises to the cytoplasm. The protein resides in the cytoskeleton. This chain is Microtubule-actin cross-linking factor 1, isoforms 6/7, found in Mus musculus (Mouse).